A 511-amino-acid chain; its full sequence is Tyrosine--tRNA ligase, chloroplastic/mitochondrial (511 aa).

Residue Tyr118 participates in L-tyrosine binding. Position 122 (Asp122) interacts with ATP. Positions 123–132 match the 'HIGH' region motif; it reads PTAESLHLGN. 5 residues coordinate L-tyrosine: Asp162, Tyr256, Gln260, Asp263, and Gln282. The 'KMSKS' region motif lies at 318–322; sequence KFGKS. Lys321 is a binding site for ATP. One can recognise an S4 RNA-binding domain in the interval 444-510; it reads LSIVDLSVSA…GKKNKVVVRI (67 aa).

The protein belongs to the class-I aminoacyl-tRNA synthetase family.

It localises to the plastid. The protein localises to the chloroplast. The protein resides in the mitochondrion. The catalysed reaction is tRNA(Tyr) + L-tyrosine + ATP = L-tyrosyl-tRNA(Tyr) + AMP + diphosphate + H(+). Functionally, catalyzes the attachment of tyrosine to tRNA(Tyr) in a two-step reaction: tyrosine is first activated by ATP to form Tyr-AMP and then transferred to the acceptor end of tRNA(Tyr). In Arabidopsis thaliana (Mouse-ear cress), this protein is Tyrosine--tRNA ligase, chloroplastic/mitochondrial.